A 672-amino-acid chain; its full sequence is MTHQQMLDLIQQLNDYSYAYHVKDEPIVPDAVYDRDYRQLQSIEAEHPEWIQADSPTQRVGEKPDSGFTNVAHTVPMLSLDNAFDNESLADFDQRIRKLLNAEQVTYCCEPKLDGLAISLRYEEGRLVRGVTRGDGLSGEDITSNIKTIYSVPLKLRTKTPPAVLEVRGEIYMPKEGFEKLNALAVEQGEKTFVNPRNAAAGSLRQLDPKVTAKRPLVMCAYSIGYVEGWEQPESHYAGLLQLSEWGFRTNDLMITAEGAQGCIDYYEKLNEKRASLSYDIDGIVYKVDQIALQNQLGFIARAPRWAIARKFPAQEEMTRILGVDFQVGRTGAITPVARLEPVFVGGVTVSNATLHNKDEIARLGVKVNDFVIVHRAGDVIPKVVQVVIDKRPENATEVVFPEACPVCGSDLEQVEGEAVIRCTGGLVCGAQLKESLKHFVSRKAMDIDGLGDKLIEQLVDQQLVKTPVDIFTLSEKKDTLLSMERMGQKSVEKLLASIEIAKSTQFNRFIYSLGIREVGEATARALTSYFTELDDLMAADQETLVEVEDVGPIVAQHVRLFFDQELNRDTIKGLLAAGVVWEKKQQVSADELPLSGKTYVVTGSLSQFSRDQVKDKLQALGAKVSGSVSAKTDCLVAGEKAGSKLTKAQSLNVPIIDEAGVIALLTEHGAI.

Residues 30–34 (DAVYD), 79–80 (SL), and E110 contribute to the NAD(+) site. K112 functions as the N6-AMP-lysine intermediate in the catalytic mechanism. Positions 133, 170, 287, and 311 each coordinate NAD(+). Residues C405, C408, C423, and C429 each coordinate Zn(2+). The BRCT domain occupies 590–672 (ADELPLSGKT…IALLTEHGAI (83 aa)).

The protein belongs to the NAD-dependent DNA ligase family. LigA subfamily. Mg(2+) serves as cofactor. The cofactor is Mn(2+).

It catalyses the reaction NAD(+) + (deoxyribonucleotide)n-3'-hydroxyl + 5'-phospho-(deoxyribonucleotide)m = (deoxyribonucleotide)n+m + AMP + beta-nicotinamide D-nucleotide.. DNA ligase that catalyzes the formation of phosphodiester linkages between 5'-phosphoryl and 3'-hydroxyl groups in double-stranded DNA using NAD as a coenzyme and as the energy source for the reaction. It is essential for DNA replication and repair of damaged DNA. The protein is DNA ligase of Marinomonas sp. (strain MWYL1).